Reading from the N-terminus, the 229-residue chain is GTP cyclohydrolase 1 (229 aa).

Positions 1–21 (MTLAKPGSGSQSRMDDKAHFK) are disordered. Positions 116, 119, and 187 each coordinate Zn(2+).

It belongs to the GTP cyclohydrolase I family. As to quaternary structure, toroid-shaped homodecamer, composed of two pentamers of five dimers.

The enzyme catalyses GTP + H2O = 7,8-dihydroneopterin 3'-triphosphate + formate + H(+). Its pathway is cofactor biosynthesis; 7,8-dihydroneopterin triphosphate biosynthesis; 7,8-dihydroneopterin triphosphate from GTP: step 1/1. The polypeptide is GTP cyclohydrolase 1 (Synechococcus sp. (strain JA-2-3B'a(2-13)) (Cyanobacteria bacterium Yellowstone B-Prime)).